The sequence spans 123 residues: PTS system glucitol/sorbitol-specific EIIA component (123 aa).

The PTS EIIA type-5 domain occupies 1 to 116 (MTVIYQTTIT…PDDIAPGSVL (116 aa)). Histidine 43 functions as the Tele-phosphohistidine intermediate in the catalytic mechanism. Histidine 43 is modified (phosphohistidine; by HPr).

It localises to the cytoplasm. The phosphoenolpyruvate-dependent sugar phosphotransferase system (sugar PTS), a major carbohydrate active transport system, catalyzes the phosphorylation of incoming sugar substrates concomitantly with their translocation across the cell membrane. The enzyme II complex composed of SrlA, SrlB and SrlE is involved in glucitol/sorbitol transport. This is PTS system glucitol/sorbitol-specific EIIA component (srlB) from Shigella flexneri.